The following is a 542-amino-acid chain: Prolyl 4-hydroxylase subunit alpha-3 (542 aa).

An N-terminal signal peptide occupies residues 1–24 (MGPGARLALLALLALGGDPAAATG). The stretch at 105–129 (LEATENIRALKDGYEKVEQDLPAFE) forms a coiled coil. One copy of the TPR repeat lies at 225–258 (EDALDYLAFACFQVGNVSCALSLSREFLVYSPDN). N-linked (GlcNAc...) asparagine glycosylation occurs at N240. Positions 420-527 (YAEYLQVVNY…KWVANKWIHE (108 aa)) constitute a Fe2OG dioxygenase domain. Fe cation-binding residues include H438 and D440. N-linked (GlcNAc...) asparagine glycosylation is present at N480. H508 contacts Fe cation. K518 serves as a coordination point for 2-oxoglutarate.

Belongs to the P4HA family. In terms of assembly, heterotetramer of two alpha-3 chains and two beta chains (the beta chain is the multi-functional PDI). It depends on Fe(2+) as a cofactor. The cofactor is L-ascorbate. In terms of processing, N-glycosylation plays no role in the catalytic activity.

Its subcellular location is the endoplasmic reticulum lumen. It catalyses the reaction L-prolyl-[collagen] + 2-oxoglutarate + O2 = trans-4-hydroxy-L-prolyl-[collagen] + succinate + CO2. Functionally, catalyzes the post-translational formation of 4-hydroxyproline in -Xaa-Pro-Gly- sequences in collagens and other proteins. The chain is Prolyl 4-hydroxylase subunit alpha-3 (P4ha3) from Mus musculus (Mouse).